The primary structure comprises 597 residues: Probable tyrosine-protein phosphatase (597 aa).

Residues 55–81 are compositionally biased toward low complexity; the sequence is VSSSSDAAPTSISTTTTSTTSMTDASA. Disordered stretches follow at residues 55–89, 107–172, and 188–228; these read VSSS…QQVY, SFSI…PNSL, and STNG…GNNN. Over residues 107–126 the composition is skewed to polar residues; that stretch reads SFSIQPNQTPTMLPTSSYTL. Low complexity predominate over residues 136–151; sequence TSSISSISSTSSNSTS. Polar residues-rich tracts occupy residues 188-206 and 216-228; these read STNG…NQPR and KKST…GNNN. The Tyrosine-protein phosphatase domain maps to 428-579; it reads GPKNVLNNLI…LMEFGDKLNN (152 aa). Residue Cys516 is the Phosphocysteine intermediate of the active site.

This sequence belongs to the protein-tyrosine phosphatase family. Non-receptor class dual specificity subfamily.

It catalyses the reaction O-phospho-L-tyrosyl-[protein] + H2O = L-tyrosyl-[protein] + phosphate. The chain is Probable tyrosine-protein phosphatase (CPP1) from Candida albicans (strain WO-1) (Yeast).